The chain runs to 258 residues: Malonyl-[acyl-carrier protein] O-methyltransferase (258 aa).

Belongs to the methyltransferase superfamily.

The catalysed reaction is malonyl-[ACP] + S-adenosyl-L-methionine = malonyl-[ACP] methyl ester + S-adenosyl-L-homocysteine. The protein operates within cofactor biosynthesis; biotin biosynthesis. Converts the free carboxyl group of a malonyl-thioester to its methyl ester by transfer of a methyl group from S-adenosyl-L-methionine (SAM). It allows to synthesize pimeloyl-ACP via the fatty acid synthetic pathway. This Haemophilus ducreyi (strain 35000HP / ATCC 700724) protein is Malonyl-[acyl-carrier protein] O-methyltransferase.